Reading from the N-terminus, the 143-residue chain is Large ribosomal subunit protein uL15 (143 aa).

It belongs to the universal ribosomal protein uL15 family. Part of the 50S ribosomal subunit.

Binds to the 23S rRNA. The polypeptide is Large ribosomal subunit protein uL15 (Methanococcus aeolicus (strain ATCC BAA-1280 / DSM 17508 / OCM 812 / Nankai-3)).